Consider the following 69-residue polypeptide: MARVTVEDCLEKVDNRFLLVMLASKRVKQLFKGAKPLIDNRAANKNVVVSLREIAAGKVNFEISSRKSR.

The protein belongs to the RNA polymerase subunit omega family. In terms of assembly, the RNAP catalytic core consists of 2 alpha, 1 beta, 1 beta' and 1 omega subunit. When a sigma factor is associated with the core the holoenzyme is formed, which can initiate transcription.

The enzyme catalyses RNA(n) + a ribonucleoside 5'-triphosphate = RNA(n+1) + diphosphate. Functionally, promotes RNA polymerase assembly. Latches the N- and C-terminal regions of the beta' subunit thereby facilitating its interaction with the beta and alpha subunits. The chain is DNA-directed RNA polymerase subunit omega from Geotalea daltonii (strain DSM 22248 / JCM 15807 / FRC-32) (Geobacter daltonii).